The chain runs to 298 residues: Probable aspartoacylase (298 aa).

2 residues coordinate Zn(2+): H13 and E16. Substrate-binding positions include R54 and 61–62 (NR). H103 provides a ligand contact to Zn(2+). Substrate contacts are provided by E161 and Y271.

It belongs to the AspA/AstE family. Aspartoacylase subfamily. It depends on Zn(2+) as a cofactor.

It carries out the reaction an N-acyl-L-aspartate + H2O = a carboxylate + L-aspartate. This Prochlorococcus marinus (strain MIT 9515) protein is Probable aspartoacylase.